The primary structure comprises 380 residues: Cytochrome b (380 aa).

A run of 4 helical transmembrane segments spans residues 34–54 (FGSL…LLAM), 78–99 (WLIR…YLHI), 114–134 (WNTG…GYVL), and 179–199 (FFAL…IHLT). Heme b is bound by residues histidine 84 and histidine 98. Heme b-binding residues include histidine 183 and histidine 197. Histidine 202 serves as a coordination point for a ubiquinone. Transmembrane regions (helical) follow at residues 227-247 (LKDI…ALFS), 289-309 (LGGV…PFLH), 321-341 (LSQL…WVGS), and 348-368 (FIII…ILFP).

This sequence belongs to the cytochrome b family. In terms of assembly, the cytochrome bc1 complex contains 11 subunits: 3 respiratory subunits (MT-CYB, CYC1 and UQCRFS1), 2 core proteins (UQCRC1 and UQCRC2) and 6 low-molecular weight proteins (UQCRH/QCR6, UQCRB/QCR7, UQCRQ/QCR8, UQCR10/QCR9, UQCR11/QCR10 and a cleavage product of UQCRFS1). This cytochrome bc1 complex then forms a dimer. Heme b is required as a cofactor.

It is found in the mitochondrion inner membrane. In terms of biological role, component of the ubiquinol-cytochrome c reductase complex (complex III or cytochrome b-c1 complex) that is part of the mitochondrial respiratory chain. The b-c1 complex mediates electron transfer from ubiquinol to cytochrome c. Contributes to the generation of a proton gradient across the mitochondrial membrane that is then used for ATP synthesis. This Macronectes giganteus (Southern giant petrel) protein is Cytochrome b (MT-CYB).